Reading from the N-terminus, the 487-residue chain is L-tartrate/succinate antiporter (487 aa).

Helical transmembrane passes span 10-30 (YLAP…AGLE), 33-53 (TWLY…EPVP), 54-74 (GAVV…WLLF), 93-113 (WAVS…FMFG), 137-157 (TLFL…VTPS), 189-209 (IGSY…AIFL), 230-250 (LSWG…VLLV), 292-312 (LMVG…AAMV), 313-333 (GYSV…DIVS), 340-360 (VFFW…TGFI), 370-390 (SLSG…FYLL), 393-413 (FFAS…AAAL), 418-438 (IPLP…SILT), and 465-485 (IFGL…MPVV).

Belongs to the SLC13A/DASS transporter (TC 2.A.47) family. DIT1 subfamily.

Its subcellular location is the cell inner membrane. The enzyme catalyses (2R,3R)-tartrate(out) + succinate(in) = (2R,3R)-tartrate(in) + succinate(out). Its function is as follows. Catalyzes the uptake of tartrate in exchange for intracellular succinate. Essential for anaerobic L-tartrate fermentation. This is L-tartrate/succinate antiporter (ttdT) from Shigella dysenteriae serotype 1 (strain Sd197).